An 807-amino-acid polypeptide reads, in one-letter code: Glycerol-3-phosphate acyltransferase (807 aa).

The short motif at 308–313 (CHRSHM) is the HXXXXD motif element.

It belongs to the GPAT/DAPAT family.

It localises to the cell inner membrane. It catalyses the reaction sn-glycerol 3-phosphate + an acyl-CoA = a 1-acyl-sn-glycero-3-phosphate + CoA. Its pathway is phospholipid metabolism; CDP-diacylglycerol biosynthesis; CDP-diacylglycerol from sn-glycerol 3-phosphate: step 1/3. The chain is Glycerol-3-phosphate acyltransferase from Shewanella baltica (strain OS223).